A 400-amino-acid chain; its full sequence is Tryptophan synthase beta chain (400 aa).

Lysine 90 carries the post-translational modification N6-(pyridoxal phosphate)lysine.

It belongs to the TrpB family. Tetramer of two alpha and two beta chains. Pyridoxal 5'-phosphate serves as cofactor.

The enzyme catalyses (1S,2R)-1-C-(indol-3-yl)glycerol 3-phosphate + L-serine = D-glyceraldehyde 3-phosphate + L-tryptophan + H2O. It participates in amino-acid biosynthesis; L-tryptophan biosynthesis; L-tryptophan from chorismate: step 5/5. In terms of biological role, the beta subunit is responsible for the synthesis of L-tryptophan from indole and L-serine. In Bacillus velezensis (strain DSM 23117 / BGSC 10A6 / LMG 26770 / FZB42) (Bacillus amyloliquefaciens subsp. plantarum), this protein is Tryptophan synthase beta chain.